We begin with the raw amino-acid sequence, 184 residues long: Threonylcarbamoyl-AMP synthase (184 aa).

The YrdC-like domain occupies 3–184 (AWFIQKAVSV…DAATGAILRQ (182 aa)).

This sequence belongs to the SUA5 family. TsaC subfamily.

It localises to the cytoplasm. It carries out the reaction L-threonine + hydrogencarbonate + ATP = L-threonylcarbamoyladenylate + diphosphate + H2O. Required for the formation of a threonylcarbamoyl group on adenosine at position 37 (t(6)A37) in tRNAs that read codons beginning with adenine. Catalyzes the conversion of L-threonine, HCO(3)(-)/CO(2) and ATP to give threonylcarbamoyl-AMP (TC-AMP) as the acyladenylate intermediate, with the release of diphosphate. The chain is Threonylcarbamoyl-AMP synthase from Hahella chejuensis (strain KCTC 2396).